Here is a 313-residue protein sequence, read N- to C-terminus: Ornithine carbamoyltransferase (313 aa).

Carbamoyl phosphate is bound by residues 61-64 (STRT), Gln88, Arg112, and 139-142 (HPCQ). L-ornithine-binding positions include Asn170, Asp228, and 232 to 233 (SM). Carbamoyl phosphate is bound by residues 268–269 (CL) and Arg296.

Belongs to the aspartate/ornithine carbamoyltransferase superfamily. OTCase family.

It is found in the cytoplasm. It catalyses the reaction carbamoyl phosphate + L-ornithine = L-citrulline + phosphate + H(+). The protein operates within amino-acid biosynthesis; L-arginine biosynthesis; L-arginine from L-ornithine and carbamoyl phosphate: step 1/3. In terms of biological role, reversibly catalyzes the transfer of the carbamoyl group from carbamoyl phosphate (CP) to the N(epsilon) atom of ornithine (ORN) to produce L-citrulline. This is Ornithine carbamoyltransferase from Bordetella avium (strain 197N).